A 274-amino-acid polypeptide reads, in one-letter code: AA9 family lytic polysaccharide monooxygenase A (274 aa).

The N-terminal stretch at 1–22 (MHVPQFISTGALLALLARPAAA) is a signal peptide. Histidine 23 is a binding site for Cu(2+). Cysteine 63 and cysteine 194 are oxidised to a cystine. Positions 67, 98, and 100 each coordinate (1,4-beta-D-glucosyl)n. Position 101 (histidine 101) interacts with Cu(2+). Histidine 174 is an O2 binding site. Residue aspartate 177 coordinates (1,4-beta-D-glucosyl)n. Tyrosine 191 contacts Cu(2+).

The protein belongs to the polysaccharide monooxygenase AA9 family. It depends on Cu(2+) as a cofactor.

Its subcellular location is the secreted. It carries out the reaction [(1-&gt;4)-beta-D-glucosyl]n+m + reduced acceptor + O2 = 4-dehydro-beta-D-glucosyl-[(1-&gt;4)-beta-D-glucosyl]n-1 + [(1-&gt;4)-beta-D-glucosyl]m + acceptor + H2O.. Its function is as follows. Lytic polysaccharide monooxygenase (LPMO) that depolymerizes crystalline and amorphous polysaccharides via the oxidation of scissile alpha- or beta-(1-4)-glycosidic bonds, yielding C4 oxidation products. Catalysis by LPMOs requires the reduction of the active-site copper from Cu(II) to Cu(I) by a reducing agent and H(2)O(2) or O(2) as a cosubstrate. Cleaves a range of polysaccharides, including cellulose, xyloglucan, mixed-linkage glucan and glucomannan. This chain is AA9 family lytic polysaccharide monooxygenase A, found in Collariella virescens (Soil fungus).